A 527-amino-acid chain; its full sequence is DNA polymerase epsilon subunit 2 (527 aa).

The protein belongs to the DNA polymerase epsilon subunit B family. As to quaternary structure, component of the DNA polymerase epsilon complex consisting of four subunits: the catalytic subunit POLE and the accessory subunits POLE2, POLE3 and POLE4.

The protein localises to the nucleus. Accessory component of the DNA polymerase epsilon complex. Participates in DNA repair and in chromosomal DNA replication. The sequence is that of DNA polymerase epsilon subunit 2 from Homo sapiens (Human).